The chain runs to 876 residues: MKYMTADEIRQSFLKYFESKGHTIVKSASIIPENDPTLLFVNAGMVPFKNVFLGLEERPYKRAASCQKVFRVSGKHNDLENVGYTPRHHTFFEMLGNFSFGDYFKKEAIEFAWEYLTEHLEIPKEKLLVSVFEEDDEAFEIWNKHIGLDESKIKRMGYKDNFWSMGDTGPCGPSSEIYYDRGEKFGNPEFGAEDDFRYLEIWNLVFMQYNRDEKGVLHPLPNPSIDTGMGLERIASVLQGVDSNYDTDLFKPIIQFAEEVSGKEYGKNEKDDIAMRVIADHLRAITFLISDGVLPANEGRGYVLRRIIRRALRYGKNLGIEKPFLYEGVDVVIEKMKTAYPELIQNRSFIKTITKSEEEKFIKTLKRSMDILYQMIEQARKENRRHLTGEETFKLYDTYGFPIDLMEEILKDEGFTFDLIEFHNLLEEQKERARKSWKSQSKEIKPVYLTLKNKLPENQFVGYETLTSENSKVLAIIKGDQLVDTAKEGEDIEIVLDITPFYPEKGGQIGDRGIIEGDEFLFEVLDTQTPVDGLIVHKGKVLFGSVKEGAYVRAKTDKERRENIMRHHTATHLLHAALRNVLGDHVKQAGSLVSDEYLRFDFTHFESMTDEELKAVEELVNREIMKNEEVVCQEMQYEEALKSGAMAIFEEKYADVVRVISAGISKELCGGTHVKRTGDIGYFKILSESAVSSGTRRIEAVAGIKAVEKGLQEHYIIKDLSRLLTAKEDQLLDRVLKLQNQIKEKEREIENLRKKLALSNINENLNIIEKEGFKVAYVSVENLNPNELREIADHLRQKLGKSVILVASKDAEKQKVNFVVAVSKELSENYKAGDIVKKVASAANGSGGGRPDFAQGGINDTSKLSQLFEEFKKIFS.

4 residues coordinate Zn(2+): histidine 568, histidine 572, cysteine 669, and histidine 673.

The protein belongs to the class-II aminoacyl-tRNA synthetase family. It depends on Zn(2+) as a cofactor.

It localises to the cytoplasm. It catalyses the reaction tRNA(Ala) + L-alanine + ATP = L-alanyl-tRNA(Ala) + AMP + diphosphate. In terms of biological role, catalyzes the attachment of alanine to tRNA(Ala) in a two-step reaction: alanine is first activated by ATP to form Ala-AMP and then transferred to the acceptor end of tRNA(Ala). Also edits incorrectly charged Ser-tRNA(Ala) and Gly-tRNA(Ala) via its editing domain. This Sulfurihydrogenibium sp. (strain YO3AOP1) protein is Alanine--tRNA ligase.